We begin with the raw amino-acid sequence, 64 residues long: Large ribosomal subunit protein bL32 (64 aa).

The segment at 1-64 is disordered; sequence MAVQQNRKTR…APKHGDETEE (64 aa). Residues 7 to 16 are compositionally biased toward basic residues; sequence RKTRSKRGMR.

The protein belongs to the bacterial ribosomal protein bL32 family.

This is Large ribosomal subunit protein bL32 from Methylococcus capsulatus (strain ATCC 33009 / NCIMB 11132 / Bath).